The sequence spans 218 residues: Ras-related protein Rab-4A (218 aa).

The GTP site is built by Gly23, Thr24, Gly25, Lys26, Ser27, Cys28, Ser42, His44, and Thr45. Ser27 serves as a coordination point for Mg(2+). A Switch 1 motif is present at residues 44–49 (HTIGVE). Positions 45 and 68 each coordinate Mg(2+). Positions 70–79 (AGQERFRSVT) match the Switch 2 motif. GTP is bound at residue Gly71. Residue Gln72 is modified to 5-glutamyl serotonin. Residues Asn126, Lys127, Asp129, Ala157, and Leu158 each coordinate GTP. Ser190 carries the phosphoserine modification. A Phosphoserine; by CDK1 modification is found at Ser204. S-geranylgeranyl cysteine attachment occurs at residues Cys216 and Cys218. Cys218 bears the Cysteine methyl ester mark.

Belongs to the small GTPase superfamily. Rab family. Interacts with SGSM1, SGSM2 and SGSM3. Interacts with RAB11FIP1, RABEP1, ZFYVE20 and RUFY1. Interacts (membrane-bound form) with NDRG1; the interaction involves NDRG1 in vesicular recycling of E-cadherin. Interacts (in GTP-bound form) with GRIPAP1 (via N-terminus). Interacts with RABEP1 and RBSN. Does not interact with HPS4. Does not interact with HPS4. Interacts with RABEP2; this interaction may mediate VEGFR2 cell surface expression. Requires Mg(2+) as cofactor. Serotonylation of Gln-72 by TGM2 during activation and aggregation of platelets leads to constitutive activation of GTPase activity. In terms of processing, phosphorylated by CDK1 kinase during mitosis. As to expression, expressed in the central nervous system, including cortex, cerebellum, midbrain and spinal cord, and in the kidney, lung, liver and spleen.

The protein localises to the membrane. Its subcellular location is the cytoplasm. The protein resides in the early endosome membrane. It is found in the recycling endosome membrane. The enzyme catalyses GTP + H2O = GDP + phosphate + H(+). Regulated by guanine nucleotide exchange factors (GEFs) which promote the exchange of bound GDP for free GTP. Regulated by GTPase activating proteins (GAPs) which increase the GTP hydrolysis activity. Inhibited by GDP dissociation inhibitors (GDIs). Its function is as follows. The small GTPases Rab are key regulators of intracellular membrane trafficking, from the formation of transport vesicles to their fusion with membranes. Rabs cycle between an inactive GDP-bound form and an active GTP-bound form that is able to recruit to membranes different sets of downstream effectors directly responsible for vesicle formation, movement, tethering and fusion. RAB4A is involved in protein transport. Also plays a role in vesicular traffic. Mediates VEGFR2 endosomal trafficking to enhance VEGFR2 signaling. Acts as a regulator of platelet alpha-granule release during activation and aggregation of platelets. The chain is Ras-related protein Rab-4A from Mus musculus (Mouse).